A 524-amino-acid chain; its full sequence is Probable inorganic phosphate transporter 1-2 (524 aa).

Residues Met-1–Ala-24 lie on the Cytoplasmic side of the membrane. Residues Ile-25 to Val-45 traverse the membrane as a helical segment. Topologically, residues Thr-46–Ala-70 are extracellular. Residues Ala-71–Leu-91 form a helical membrane-spanning segment. Residues Gly-92–Lys-99 lie on the Cytoplasmic side of the membrane. The chain crosses the membrane as a helical span at residues Val-100–Gly-120. Residues Asn-121 to Cys-131 are Extracellular-facing. The helical transmembrane segment at Phe-132–Met-152 threads the bilayer. At Ser-153–Arg-161 the chain is on the cytoplasmic side. The chain crosses the membrane as a helical span at residues Gly-162–Val-182. At Ala-183–Val-211 the chain is on the extracellular side. A helical transmembrane segment spans residues Asp-212 to Trp-232. Residues Arg-233–Arg-292 lie on the Cytoplasmic side of the membrane. A helical membrane pass occupies residues His-293 to Ser-313. At Gln-314–Thr-348 the chain is on the extracellular side. The chain crosses the membrane as a helical span at residues Leu-349–Ile-369. Residues Gly-370 to Arg-371 lie on the Cytoplasmic side of the membrane. Residues Phe-372–Pro-392 traverse the membrane as a helical segment. Topologically, residues Tyr-393–Arg-402 are extracellular. Residues Ile-403 to Thr-423 traverse the membrane as a helical segment. Topologically, residues Thr-424 to His-441 are cytoplasmic. The chain crosses the membrane as a helical span at residues Gly-442–Ala-462. At Ala-463–Ser-484 the chain is on the extracellular side. A helical transmembrane segment spans residues Leu-485–Pro-505. The Cytoplasmic segment spans residues Lys-506–Lys-524.

The protein belongs to the major facilitator superfamily. Phosphate:H(+) symporter (TC 2.A.1.9) family. In terms of tissue distribution, root specific, especially in trichoblasts. In mature plants, localized in root cortical cells and young lateral roots.

The protein resides in the membrane. Its function is as follows. High-affinity transporter for external inorganic phosphate. The chain is Probable inorganic phosphate transporter 1-2 (PHT1-2) from Arabidopsis thaliana (Mouse-ear cress).